A 443-amino-acid chain; its full sequence is Histidinol dehydrogenase (443 aa).

Tyrosine 133, glutamine 191, and asparagine 214 together coordinate NAD(+). 3 residues coordinate substrate: serine 240, glutamine 262, and histidine 265. Zn(2+) is bound by residues glutamine 262 and histidine 265. Residues glutamate 329 and histidine 330 each act as proton acceptor in the active site. Substrate-binding residues include histidine 330, aspartate 363, glutamate 417, and histidine 422. Aspartate 363 provides a ligand contact to Zn(2+). Position 422 (histidine 422) interacts with Zn(2+).

The protein belongs to the histidinol dehydrogenase family. In terms of assembly, homodimer. Zn(2+) serves as cofactor.

It carries out the reaction L-histidinol + 2 NAD(+) + H2O = L-histidine + 2 NADH + 3 H(+). The protein operates within amino-acid biosynthesis; L-histidine biosynthesis; L-histidine from 5-phospho-alpha-D-ribose 1-diphosphate: step 9/9. Functionally, catalyzes the sequential NAD-dependent oxidations of L-histidinol to L-histidinaldehyde and then to L-histidine. This chain is Histidinol dehydrogenase, found in Yersinia pestis.